The primary structure comprises 847 residues: Putative disease resistance RPP13-like protein 3 (847 aa).

A coiled-coil region spans residues 24–41 (LMGVKDDLEELKTELTCI). The NB-ARC domain maps to 143–453 (TNVRVRQLRR…AEGFIQEDEE (311 aa)). 192–199 (GMGGLGKT) lines the ATP pocket.

This sequence belongs to the disease resistance NB-LRR family. RPP13 subfamily.

In terms of biological role, potential disease resistance protein. The sequence is that of Putative disease resistance RPP13-like protein 3 (RPP13L3) from Arabidopsis thaliana (Mouse-ear cress).